A 1110-amino-acid chain; its full sequence is RNA2 polyprotein (1110 aa).

Residues 195–215 (VHPGGPALPPPPPPPPIQKPP) are disordered. Residues 200–213 (PALPPPPPPPPIQK) are compositionally biased toward pro residues.

The protein belongs to the nepoviruses RNA2 polyprotein family. Specific enzymatic cleavages in vivo by the P1 encoded 3C-like protease yield mature proteins.

It localises to the host cell junction. The protein localises to the host plasmodesma. Its subcellular location is the virion. Its function is as follows. Implicated in RNA2 replication. Could also be required for nematode transmission of the virus. Transports viral genome to neighboring plant cells directly through plasmosdesmata, without any budding. The movement protein allows efficient cell to cell propagation, by bypassing the host cell wall barrier. Acts by forming a tubular structure at the host plasmodesmata, enlarging it enough to allow free passage of virion capsids. The sequence is that of RNA2 polyprotein from Arabis mosaic virus (isolate NW) (ArMV).